Here is a 187-residue protein sequence, read N- to C-terminus: uncharacterized protein (187 aa).

The Nudix hydrolase domain maps to 26–157 (NRHAAVLLPI…YLDVSRRGQQ (132 aa)). The short motif at 64-86 (GVADPKDKSIIATALREAEEEVN) is the Nudix box element. Residues glutamate 80 and glutamate 84 each contribute to the Mg(2+) site.

Belongs to the Nudix hydrolase family. PCD1 subfamily. Mn(2+) serves as cofactor. The cofactor is Mg(2+).

Its function is as follows. Probably mediates the hydrolysis of some nucleoside diphosphate derivatives. This is an uncharacterized protein from Photorhabdus laumondii subsp. laumondii (strain DSM 15139 / CIP 105565 / TT01) (Photorhabdus luminescens subsp. laumondii).